Here is a 200-residue protein sequence, read N- to C-terminus: Oligoribonuclease (200 aa).

In terms of domain architecture, Exonuclease spans 5–169 (MVWIDCEMTG…ADIRESIAEL (165 aa)). Tyrosine 126 is a catalytic residue.

The protein belongs to the oligoribonuclease family.

The protein resides in the cytoplasm. In terms of biological role, 3'-to-5' exoribonuclease specific for small oligoribonucleotides. This Streptomyces coelicolor (strain ATCC BAA-471 / A3(2) / M145) protein is Oligoribonuclease.